Here is a 239-residue protein sequence, read N- to C-terminus: Elongation factor Ts (239 aa).

Residues 82–85 (TDFV) are involved in Mg(2+) ion dislocation from EF-Tu. Residues 213-239 (AAQTKPKAEEKPAAKKATSKKKKGKKK) are disordered. The span at 229–239 (ATSKKKKGKKK) shows a compositional bias: basic residues.

This sequence belongs to the EF-Ts family.

The protein resides in the cytoplasm. Functionally, associates with the EF-Tu.GDP complex and induces the exchange of GDP to GTP. It remains bound to the aminoacyl-tRNA.EF-Tu.GTP complex up to the GTP hydrolysis stage on the ribosome. The sequence is that of Elongation factor Ts from Acaryochloris marina (strain MBIC 11017).